The chain runs to 189 residues: Photosystem I assembly protein Ycf4 (189 aa).

2 consecutive transmembrane segments (helical) span residues 31 to 51 and 70 to 90; these read TVILVGASGFFLVGISSYFGF and VMSFYGVAGILLSVYLWLTII.

Belongs to the Ycf4 family.

It is found in the plastid. The protein localises to the chloroplast thylakoid membrane. Its function is as follows. Seems to be required for the assembly of the photosystem I complex. In Chlorokybus atmophyticus (Soil alga), this protein is Photosystem I assembly protein Ycf4.